We begin with the raw amino-acid sequence, 193 residues long: uncharacterized protein (193 aa).

This is an uncharacterized protein from Aquifex aeolicus (strain VF5).